A 342-amino-acid polypeptide reads, in one-letter code: Farnesyl pyrophosphate synthase 2 (342 aa).

The isopentenyl diphosphate site is built by lysine 47, arginine 50, and glutamine 86. Mg(2+) is bound by residues aspartate 93 and aspartate 97. Arginine 102 contacts dimethylallyl diphosphate. Arginine 103 is an isopentenyl diphosphate binding site. Positions 190, 191, 229, 246, and 255 each coordinate dimethylallyl diphosphate.

This sequence belongs to the FPP/GGPP synthase family. It depends on Mg(2+) as a cofactor.

It is found in the cytoplasm. The enzyme catalyses isopentenyl diphosphate + dimethylallyl diphosphate = (2E)-geranyl diphosphate + diphosphate. It carries out the reaction isopentenyl diphosphate + (2E)-geranyl diphosphate = (2E,6E)-farnesyl diphosphate + diphosphate. It functions in the pathway isoprenoid biosynthesis; farnesyl diphosphate biosynthesis; farnesyl diphosphate from geranyl diphosphate and isopentenyl diphosphate: step 1/1. It participates in isoprenoid biosynthesis; geranyl diphosphate biosynthesis; geranyl diphosphate from dimethylallyl diphosphate and isopentenyl diphosphate: step 1/1. In terms of biological role, catalyzes the sequential condensation of isopentenyl pyrophosphate with the allylic pyrophosphates, dimethylallyl pyrophosphate, and then with the resultant geranylpyrophosphate to the ultimate product farnesyl pyrophosphate. This is Farnesyl pyrophosphate synthase 2 (FPS2) from Arabidopsis thaliana (Mouse-ear cress).